We begin with the raw amino-acid sequence, 166 residues long: Phosphopantetheine adenylyltransferase (166 aa).

Substrate is bound at residue S11. ATP contacts are provided by residues 11–12 (SF) and H19. Residues K43, A76, and R90 each coordinate substrate. Residues 91–93 (GLR), E101, and 126–132 (MQPISSS) each bind ATP.

Belongs to the bacterial CoaD family. In terms of assembly, homohexamer. Mg(2+) serves as cofactor.

Its subcellular location is the cytoplasm. The enzyme catalyses (R)-4'-phosphopantetheine + ATP + H(+) = 3'-dephospho-CoA + diphosphate. It participates in cofactor biosynthesis; coenzyme A biosynthesis; CoA from (R)-pantothenate: step 4/5. Reversibly transfers an adenylyl group from ATP to 4'-phosphopantetheine, yielding dephospho-CoA (dPCoA) and pyrophosphate. The polypeptide is Phosphopantetheine adenylyltransferase (Streptococcus uberis (strain ATCC BAA-854 / 0140J)).